Here is a 260-residue protein sequence, read N- to C-terminus: Small ribosomal subunit protein uS2 (260 aa).

It belongs to the universal ribosomal protein uS2 family.

The protein is Small ribosomal subunit protein uS2 of Staphylococcus carnosus (strain TM300).